We begin with the raw amino-acid sequence, 204 residues long: Urease accessory protein UreG (204 aa).

GTP is bound at residue 12–19; it reads GPVGSGKT.

This sequence belongs to the SIMIBI class G3E GTPase family. UreG subfamily. As to quaternary structure, homodimer. UreD, UreF and UreG form a complex that acts as a GTP-hydrolysis-dependent molecular chaperone, activating the urease apoprotein by helping to assemble the nickel containing metallocenter of UreC. The UreE protein probably delivers the nickel.

Its subcellular location is the cytoplasm. Its function is as follows. Facilitates the functional incorporation of the urease nickel metallocenter. This process requires GTP hydrolysis, probably effectuated by UreG. This is Urease accessory protein UreG from Streptococcus salivarius (strain 57.I).